The sequence spans 319 residues: Iron-sulfur cluster transfer protein NUBPL (319 aa).

Residues 1–38 constitute a mitochondrion transit peptide; that stretch reads MGTWRRLLLFGGVSLRGGGAATVPPRGCRALGCGRQLL. 75 to 82 serves as a coordination point for ATP; that stretch reads GKGGVGKS.

It belongs to the Mrp/NBP35 ATP-binding proteins family. It depends on [4Fe-4S] cluster as a cofactor.

The protein localises to the mitochondrion. Functionally, iron-sulfur cluster transfer protein involved in the assembly of the mitochondrial membrane respiratory chain NADH dehydrogenase (Complex I). May deliver one or more Fe-S clusters to complex I subunits. The chain is Iron-sulfur cluster transfer protein NUBPL (Nubpl) from Mus musculus (Mouse).